We begin with the raw amino-acid sequence, 473 residues long: Fumarate hydratase class II (473 aa).

Substrate is bound by residues serine 104 to threonine 106, histidine 128 to aspartate 131, serine 138 to asparagine 140, and threonine 186. Histidine 187 acts as the Proton donor/acceptor in catalysis. The active site involves serine 318. Substrate contacts are provided by residues serine 319 and lysine 324–asparagine 326.

It belongs to the class-II fumarase/aspartase family. Fumarase subfamily. In terms of assembly, homotetramer.

The protein resides in the cytoplasm. It catalyses the reaction (S)-malate = fumarate + H2O. Its pathway is carbohydrate metabolism; tricarboxylic acid cycle; (S)-malate from fumarate: step 1/1. Functionally, involved in the TCA cycle. Catalyzes the stereospecific interconversion of fumarate to L-malate. The chain is Fumarate hydratase class II from Corynebacterium efficiens (strain DSM 44549 / YS-314 / AJ 12310 / JCM 11189 / NBRC 100395).